A 153-amino-acid chain; its full sequence is Ribonuclease H (153 aa).

Residues 1-142 (MLKTIKIFSD…CDHLARESAK (142 aa)) enclose the RNase H type-1 domain. Mg(2+) contacts are provided by aspartate 10, glutamate 48, aspartate 70, and aspartate 134.

It belongs to the RNase H family. As to quaternary structure, monomer. Mg(2+) serves as cofactor.

The protein resides in the cytoplasm. It catalyses the reaction Endonucleolytic cleavage to 5'-phosphomonoester.. In terms of biological role, endonuclease that specifically degrades the RNA of RNA-DNA hybrids. This is Ribonuclease H from Buchnera aphidicola subsp. Baizongia pistaciae (strain Bp).